A 175-amino-acid polypeptide reads, in one-letter code: Shikimate kinase (175 aa).

12–17 (GAGKTT) contacts ATP. Threonine 16 serves as a coordination point for Mg(2+). Substrate is bound by residues aspartate 34, arginine 58, and glycine 80. Arginine 117 contributes to the ATP binding site. Arginine 136 contributes to the substrate binding site.

This sequence belongs to the shikimate kinase family. As to quaternary structure, monomer. Requires Mg(2+) as cofactor.

The protein localises to the cytoplasm. The enzyme catalyses shikimate + ATP = 3-phosphoshikimate + ADP + H(+). Its pathway is metabolic intermediate biosynthesis; chorismate biosynthesis; chorismate from D-erythrose 4-phosphate and phosphoenolpyruvate: step 5/7. Catalyzes the specific phosphorylation of the 3-hydroxyl group of shikimic acid using ATP as a cosubstrate. The polypeptide is Shikimate kinase (Saccharopolyspora erythraea (strain ATCC 11635 / DSM 40517 / JCM 4748 / NBRC 13426 / NCIMB 8594 / NRRL 2338)).